Here is a 564-residue protein sequence, read N- to C-terminus: Eukaryotic translation initiation factor 3 subunit L (564 aa).

An N-acetylserine modification is found at Ser-2. One can recognise a PCI domain in the interval 331-537 (DAIRVFANIL…IHIADTKVAR (207 aa)). 2 positions are modified to N6-acetyllysine: Lys-465 and Lys-549.

This sequence belongs to the eIF-3 subunit L family. In terms of assembly, component of the eukaryotic translation initiation factor 3 (eIF-3) complex, which is composed of 13 subunits: EIF3A, EIF3B, EIF3C, EIF3D, EIF3E, EIF3F, EIF3G, EIF3H, EIF3I, EIF3J, EIF3K, EIF3L and EIF3M. The eIF-3 complex appears to include 3 stable modules: module A is composed of EIF3A, EIF3B, EIF3G and EIF3I; module B is composed of EIF3F, EIF3H, and EIF3M; and module C is composed of EIF3C, EIF3D, EIF3E, EIF3K and EIF3L. EIF3C of module C binds EIF3B of module A and EIF3H of module B, thereby linking the three modules. EIF3J is a labile subunit that binds to the eIF-3 complex via EIF3B. The eIF-3 complex interacts with RPS6KB1 under conditions of nutrient depletion. Mitogenic stimulation leads to binding and activation of a complex composed of MTOR and RPTOR, leading to phosphorylation and release of RPS6KB1 and binding of EIF4B to eIF-3. Interacts with RRN3.

Its subcellular location is the cytoplasm. Functionally, component of the eukaryotic translation initiation factor 3 (eIF-3) complex, which is required for several steps in the initiation of protein synthesis. The eIF-3 complex associates with the 40S ribosome and facilitates the recruitment of eIF-1, eIF-1A, eIF-2:GTP:methionyl-tRNAi and eIF-5 to form the 43S pre-initiation complex (43S PIC). The eIF-3 complex stimulates mRNA recruitment to the 43S PIC and scanning of the mRNA for AUG recognition. The eIF-3 complex is also required for disassembly and recycling of post-termination ribosomal complexes and subsequently prevents premature joining of the 40S and 60S ribosomal subunits prior to initiation. The eIF-3 complex specifically targets and initiates translation of a subset of mRNAs involved in cell proliferation, including cell cycling, differentiation and apoptosis, and uses different modes of RNA stem-loop binding to exert either translational activation or repression. This Bos taurus (Bovine) protein is Eukaryotic translation initiation factor 3 subunit L.